The sequence spans 434 residues: Asparagine--tRNA ligase (434 aa).

Belongs to the class-II aminoacyl-tRNA synthetase family.

The protein resides in the cytoplasm. It carries out the reaction tRNA(Asn) + L-asparagine + ATP = L-asparaginyl-tRNA(Asn) + AMP + diphosphate + H(+). This is Asparagine--tRNA ligase from Pyrococcus horikoshii (strain ATCC 700860 / DSM 12428 / JCM 9974 / NBRC 100139 / OT-3).